The sequence spans 50 residues: Large ribosomal subunit protein bL33 (50 aa).

The protein belongs to the bacterial ribosomal protein bL33 family.

This chain is Large ribosomal subunit protein bL33, found in Citrifermentans bemidjiense (strain ATCC BAA-1014 / DSM 16622 / JCM 12645 / Bem) (Geobacter bemidjiensis).